The following is a 287-amino-acid chain: NH(3)-dependent NAD(+) synthetase (287 aa).

53-60 (GISGGQDS) contacts ATP. Residue aspartate 59 participates in Mg(2+) binding. Deamido-NAD(+) is bound at residue arginine 146. An ATP-binding site is contributed by threonine 166. Glutamate 171 provides a ligand contact to Mg(2+). The deamido-NAD(+) site is built by lysine 179 and aspartate 186. The ATP site is built by lysine 195 and threonine 217. A deamido-NAD(+)-binding site is contributed by 266 to 267 (HK).

The protein belongs to the NAD synthetase family. As to quaternary structure, homodimer.

It catalyses the reaction deamido-NAD(+) + NH4(+) + ATP = AMP + diphosphate + NAD(+) + H(+). It functions in the pathway cofactor biosynthesis; NAD(+) biosynthesis; NAD(+) from deamido-NAD(+) (ammonia route): step 1/1. Functionally, catalyzes the ATP-dependent amidation of deamido-NAD to form NAD. Uses ammonia as a nitrogen source. In Deinococcus radiodurans (strain ATCC 13939 / DSM 20539 / JCM 16871 / CCUG 27074 / LMG 4051 / NBRC 15346 / NCIMB 9279 / VKM B-1422 / R1), this protein is NH(3)-dependent NAD(+) synthetase.